The primary structure comprises 839 residues: ATP-binding cassette sub-family F member 1 (839 aa).

The interval 1–258 is disordered; sequence MPKGPKQQPP…KKEKKKLKKQ (258 aa). Position 22 is a phosphoserine (Ser-22). Residues 29–39 are compositionally biased toward basic residues; that stretch reads KKGKKDKKTKK. Basic and acidic residues predominate over residues 47 to 64; it reads VEDKQAGEEEKLQKEKEQ. Residues 71-83 show a composition bias toward basic residues; that stretch reads QKKKRDTRKGRRK. A phosphoserine mark is found at Ser-105, Ser-109, and Ser-140. Residues 136–149 show a composition bias toward acidic residues; sequence IQDESEEEKEEEEE. The span at 150 to 162 shows a compositional bias: basic and acidic residues; sequence KPVLKPAKPEKNR. Residue Thr-195 is modified to Phosphothreonine. Ser-197 carries the phosphoserine modification. Over residues 206-223 the composition is skewed to basic and acidic residues; it reads TKEKEPPRPGKDKDKKGA. A Phosphoserine modification is found at Ser-227. The span at 247-256 shows a compositional bias: basic residues; the sequence is LSKKEKKKLK. An ABC transporter 1 domain is found at 298–542; the sequence is IKLEKFSISA…MYQQKQKELL (245 aa). 330-337 contacts ATP; it reads GPNGKGKT. Over residues 553–574 the composition is skewed to basic and acidic residues; it reads KELKAGGKSTKQAEKQTKEVLT. Positions 553–600 are disordered; the sequence is KELKAGGKSTKQAEKQTKEVLTRKQQKCRRKNQDEESQDPPELLKRPR. Ser-589 is modified (phosphoserine). The 216-residue stretch at 619-834 folds into the ABC transporter 2 domain; the sequence is LGLHGVTFGY…VLEALGEVMV (216 aa). 652–659 contacts ATP; that stretch reads GPNGVGKS.

In terms of assembly, interacts (via N-terminus) with EIF2S1; the interaction is independent of its phosphorylated status. Associates (via both ABC transporter domains) with the ribosomes. Phosphorylated at phosphoserine and phosphothreonine. Phosphorylation on Ser-109 and Ser-140 by CK2; inhibits association of EIF2 with ribosomes.

The protein resides in the cytoplasm. It localises to the nucleus. Its subcellular location is the nucleoplasm. It is found in the nucleus envelope. In terms of biological role, required for efficient Cap- and IRES-mediated mRNA translation initiation. Not involved in the ribosome biogenesis. The polypeptide is ATP-binding cassette sub-family F member 1 (Abcf1) (Rattus norvegicus (Rat)).